Consider the following 434-residue polypeptide: F-box/LRR-repeat protein 21 (434 aa).

Residues 39–85 (LLDWGNLPHHVVLRIFQYLPLIDRARASSVCRRWNEVFHIPDLWRKF) enclose the F-box domain. LRR repeat units follow at residues 187-213 (DTPVDDPSLSILVANNSGTLRRLKMSS), 214-239 (CPHVSSNGILCVADHCQGLRELALNY), 242-265 (LSDKLLLALSNETHVNLEHLRIDV), 322-347 (GRSVSKEILGRLGLNCPRLTELVVCA), 349-374 (GIQVIDTELICIAEHCKNLTALGLSE), and 375-400 (CEVSCSAFIEFVRLCGRKLTHLSIME).

In terms of assembly, part of the SCF (SKP1-CUL1-F-box) E3 ubiquitin-protein ligase complex SCF(FBXL21) composed of CUL1, SKP1, RBX1 and FBXL21. Interacts with CRY1 and CRY2.

Its subcellular location is the cytoplasm. The protein localises to the cytosol. It localises to the nucleus. It functions in the pathway protein modification; protein ubiquitination. In terms of biological role, substrate-recognition component of the SCF(FBXL21) E3 ubiquitin ligase complex involved in circadian rhythm function. Plays a key role in the maintenance of both the speed and the robustness of the circadian clock oscillation. The SCF(FBXL21) complex mainly acts in the cytosol and mediates ubiquitination of CRY proteins (CRY1 and CRY2), leading to CRY proteins stabilization. The SCF(FBXL21) complex counteracts the activity of the SCF(FBXL3) complex and protects CRY proteins from degradation. Involved in the hypothalamic suprachiasmatic nucleus (SCN) clock regulating temporal organization of the daily activities. The polypeptide is F-box/LRR-repeat protein 21 (FBXL21) (Bos taurus (Bovine)).